We begin with the raw amino-acid sequence, 440 residues long: Gap junction gamma-2 protein (440 aa).

At 1 to 21 (MTNMSWSFLTRLLEEIHNHST) the chain is on the cytoplasmic side. The helical transmembrane segment at 22-42 (FVGKVWLTVLVVFRIVLTAVG) threads the bilayer. The Extracellular portion of the chain corresponds to 43 to 78 (GESIYSDEQSKFTCNTRQPGCDNVCYDAFAPLSHVR). The chain crosses the membrane as a helical span at residues 79–99 (FWVFQIVVISTPSVMYLGYAV). At 100–223 (HRLARASEQE…AQLVVRAAFE (124 aa)) the chain is on the cytoplasmic side. Residues 108–199 (QERRRALRRR…TPGPAGQHDG (92 aa)) form a disordered region. Residues 112–124 (RALRRRPGPRRLP) are compositionally biased toward basic residues. Residues 150 to 173 (LEEDEDEEPGAPEGPGEDTEEERT) are compositionally biased toward acidic residues. A helical membrane pass occupies residues 224-244 (VAFLVGQYLLYGFEVPPFFAC). Topologically, residues 245-264 (SRQPCPHVVDCFVSRPTEKT) are extracellular. Residues 265–285 (VFLLVMYVVSCLCLLLNLCEM) form a helical membrane-spanning segment. Residues 286-440 (AHLGLGSAQD…SRDGKATVWI (155 aa)) are Cytoplasmic-facing. The disordered stretch occupies residues 368-440 (ADRDSPPCSG…SRDGKATVWI (73 aa)). The residue at position 372 (Ser-372) is a Phosphoserine. Residues 380–401 (ATSRGPPRAGGPASGTGSATSG) show a composition bias toward low complexity.

Belongs to the connexin family. Gamma-type subfamily. A connexon is composed of a hexamer of connexins. Interacts with TJP1. Mainly expressed by oligodendrocytes in the central nervous system. Expressed in optic nerve (at protein level).

Its subcellular location is the cell membrane. It localises to the cell junction. The protein resides in the gap junction. Its function is as follows. One gap junction consists of a cluster of closely packed pairs of transmembrane channels, the connexons, through which materials of low MW diffuse from one cell to a neighboring cell. May play a role in myelination in central and peripheral nervous systems. The chain is Gap junction gamma-2 protein (Gjc2) from Rattus norvegicus (Rat).